Consider the following 198-residue polypeptide: Chromophore lyase CpcS/CpeS 2 (198 aa).

The protein belongs to the CpcS/CpeS biliprotein lyase family.

It localises to the plastid. The protein localises to the organellar chromatophore. Its function is as follows. Covalently attaches a chromophore to Cys residue(s) of phycobiliproteins. This Paulinella chromatophora protein is Chromophore lyase CpcS/CpeS 2.